The sequence spans 249 residues: Molybdate/tungstate transport system permease protein WtpB (249 aa).

Over 1-5 the chain is Cytoplasmic; that stretch reads MEKFD. The chain crosses the membrane as a helical span at residues 6–26; it reads IAMTVFLVMIFLFIFLPIIYM. Over 27–48 the chain is Extracellular; it reads LSNPGDLNQLLDKEVIEAFKTT. Positions 45-240 constitute an ABC transmembrane type-1 domain; it reads FKTTLLAGAV…LISIALFALL (196 aa). A helical membrane pass occupies residues 49-69; the sequence is LLAGAVATLIALIFGIPTGYI. The Cytoplasmic portion of the chain corresponds to 70-93; sequence LARYDFKFKSFVEAVLDLPMAIPH. The chain crosses the membrane as a helical span at residues 94-114; that stretch reads SVIGIIILSFIYGIDIINFIG. The Extracellular segment spans residues 115-116; sequence RY. Residues 117–137 form a helical membrane-spanning segment; it reads VVDNFWGIVTVYLFVGIPFMV. At 138–177 the chain is on the cytoplasmic side; it reads NSIRDGFLSVDEEIEYVSRTLGASKIRTFFEISLPLIKNN. Residues 178–198 traverse the membrane as a helical segment; it reads IISGIILSFARGISEVGAILI. Over 199-223 the chain is Extracellular; the sequence is IAYYPKTVPILIYERFMSFGLDASK. The chain crosses the membrane as a helical span at residues 224 to 244; sequence PISVGMILISIALFALLRMFG. Residues 245–249 lie on the Cytoplasmic side of the membrane; it reads RMRGR.

The protein belongs to the binding-protein-dependent transport system permease family. As to quaternary structure, the complex is composed of two ATP-binding proteins (WtpC), two transmembrane proteins (WtpB) and a solute-binding protein (WtpA).

The protein resides in the cell membrane. Part of the ABC transporter complex WtpABC involved in molybdate/tungstate import. Probably responsible for the translocation of the substrate across the membrane. The protein is Molybdate/tungstate transport system permease protein WtpB (wtpB) of Methanocaldococcus jannaschii (strain ATCC 43067 / DSM 2661 / JAL-1 / JCM 10045 / NBRC 100440) (Methanococcus jannaschii).